The primary structure comprises 2142 residues: U5 small nuclear ribonucleoprotein 200 kDa helicase (2142 aa).

Disordered stretches follow at residues 52–74 (MGDR…RQKR), 211–234 (EESE…QDEG), and 366–396 (RQLD…DGGA). Residues 369-391 (DTGKSEDQEEGEARGSKRGKGDA) are compositionally biased toward basic and acidic residues. The Helicase ATP-binding 1 domain maps to 490-673 (KAALDSDENM…FLRVKPDKGL (184 aa)). 503–510 (APTGAGKT) contributes to the ATP binding site. The DEIH box signature appears at 615–618 (DEIH). Positions 684–917 (SLEQQYIGVT…GTVQHLQDAV (234 aa)) constitute a Helicase C-terminal 1 domain. An SEC63 1 domain is found at 981-1286 (VTDLGRIASH…GAETQLPVSF (306 aa)). A Helicase ATP-binding 2 domain is found at 1337–1511 (NAVYNSDENV…WLGCNPNATF (175 aa)). 1350–1357 (APTGSGKM) contributes to the ATP binding site. The DELQ box signature appears at 1453-1456 (DELQ). The Helicase C-terminal 2 domain occupies 1544 to 1752 (PVYNAILKYS…TIENKQDAVD (209 aa)). Residues 1811 to 2128 (PLNLGMIAAY…GCDQEYKFSI (318 aa)) enclose the SEC63 2 domain.

Belongs to the helicase family. SKI2 subfamily.

It localises to the nucleus. The catalysed reaction is ATP + H2O = ADP + phosphate + H(+). Its function is as follows. Catalyzes the ATP-dependent unwinding of U4/U6 RNA duplices, an essential step in the assembly of a catalytically active spliceosome. Plays a role in pre-mRNA splicing. This is U5 small nuclear ribonucleoprotein 200 kDa helicase from Drosophila melanogaster (Fruit fly).